A 265-amino-acid chain; its full sequence is Hydroxyethylthiazole kinase (265 aa).

Met-44 is a substrate binding site. ATP contacts are provided by Lys-120 and Ser-166. Gly-193 contacts substrate.

It belongs to the Thz kinase family. Mg(2+) serves as cofactor.

It catalyses the reaction 5-(2-hydroxyethyl)-4-methylthiazole + ATP = 4-methyl-5-(2-phosphooxyethyl)-thiazole + ADP + H(+). The protein operates within cofactor biosynthesis; thiamine diphosphate biosynthesis; 4-methyl-5-(2-phosphoethyl)-thiazole from 5-(2-hydroxyethyl)-4-methylthiazole: step 1/1. Catalyzes the phosphorylation of the hydroxyl group of 4-methyl-5-beta-hydroxyethylthiazole (THZ). The sequence is that of Hydroxyethylthiazole kinase from Methanosphaerula palustris (strain ATCC BAA-1556 / DSM 19958 / E1-9c).